Consider the following 433-residue polypeptide: Adenylosuccinate synthetase (433 aa).

GTP contacts are provided by residues 18–24 (GDEGKGK) and 46–48 (GHT). The active-site Proton acceptor is Asp-19. The Mg(2+) site is built by Asp-19 and Gly-46. Residues 19–22 (DEGK), 44–47 (NAGH), Thr-136, Arg-150, Gln-229, Thr-244, and Arg-308 each bind IMP. His-47 (proton donor) is an active-site residue. Substrate is bound at residue 304–310 (VTTKRMR). Residues Arg-310, 336–338 (KID), and 420–422 (GTG) contribute to the GTP site.

Belongs to the adenylosuccinate synthetase family. As to quaternary structure, homodimer. Mg(2+) serves as cofactor.

It localises to the cytoplasm. The enzyme catalyses IMP + L-aspartate + GTP = N(6)-(1,2-dicarboxyethyl)-AMP + GDP + phosphate + 2 H(+). It participates in purine metabolism; AMP biosynthesis via de novo pathway; AMP from IMP: step 1/2. Its function is as follows. Plays an important role in the de novo pathway and in the salvage pathway of purine nucleotide biosynthesis. Catalyzes the first committed step in the biosynthesis of AMP from IMP. The chain is Adenylosuccinate synthetase from Schistosoma japonicum (Blood fluke).